The primary structure comprises 213 residues: Pyridoxine/pyridoxamine 5'-phosphate oxidase (213 aa).

Substrate-binding positions include 10–13 (REEY) and lysine 68. FMN-binding positions include 63-68 (RMLLLK), 78-79 (FT), lysine 85, and glutamine 107. The substrate site is built by tyrosine 125, arginine 129, and serine 133. FMN-binding positions include 142–143 (QS) and tryptophan 186. 192–194 (RLH) provides a ligand contact to substrate. Arginine 196 lines the FMN pocket.

It belongs to the pyridoxamine 5'-phosphate oxidase family. Homodimer. It depends on FMN as a cofactor.

The catalysed reaction is pyridoxamine 5'-phosphate + O2 + H2O = pyridoxal 5'-phosphate + H2O2 + NH4(+). The enzyme catalyses pyridoxine 5'-phosphate + O2 = pyridoxal 5'-phosphate + H2O2. The protein operates within cofactor metabolism; pyridoxal 5'-phosphate salvage; pyridoxal 5'-phosphate from pyridoxamine 5'-phosphate: step 1/1. It participates in cofactor metabolism; pyridoxal 5'-phosphate salvage; pyridoxal 5'-phosphate from pyridoxine 5'-phosphate: step 1/1. Functionally, catalyzes the oxidation of either pyridoxine 5'-phosphate (PNP) or pyridoxamine 5'-phosphate (PMP) into pyridoxal 5'-phosphate (PLP). The chain is Pyridoxine/pyridoxamine 5'-phosphate oxidase from Nocardioides sp. (strain ATCC BAA-499 / JS614).